A 365-amino-acid polypeptide reads, in one-letter code: tRNA-specific 2-thiouridylase MnmA (365 aa).

ATP is bound by residues 9 to 16 (GLSGGVDS) and M35. Residues 95–97 (NPD) are interaction with target base in tRNA. C100 serves as the catalytic Nucleophile. A disulfide bridge connects residues C100 and C196. G124 provides a ligand contact to ATP. Residues 146-148 (KDQ) form an interaction with tRNA region. Catalysis depends on C196, which acts as the Cysteine persulfide intermediate. The segment at 315 to 316 (RY) is interaction with tRNA.

This sequence belongs to the MnmA/TRMU family.

Its subcellular location is the cytoplasm. It carries out the reaction S-sulfanyl-L-cysteinyl-[protein] + uridine(34) in tRNA + AH2 + ATP = 2-thiouridine(34) in tRNA + L-cysteinyl-[protein] + A + AMP + diphosphate + H(+). Catalyzes the 2-thiolation of uridine at the wobble position (U34) of tRNA, leading to the formation of s(2)U34. The chain is tRNA-specific 2-thiouridylase MnmA from Dechloromonas aromatica (strain RCB).